The following is a 339-amino-acid chain: tRNA pseudouridine synthase B (339 aa).

Catalysis depends on D40, which acts as the Nucleophile. The 46-residue stretch at 262-307 (FRRLSKFAYREEFEENTERSTAAYTLVREDANTGLTYKLPLEVELS) folds into the RPE1 insert domain.

The protein belongs to the pseudouridine synthase TruB family. Type 1 subfamily.

It carries out the reaction uridine(55) in tRNA = pseudouridine(55) in tRNA. Its function is as follows. Responsible for synthesis of pseudouridine from uracil-55 in the psi GC loop of transfer RNAs. The sequence is that of tRNA pseudouridine synthase B from Rickettsia felis (strain ATCC VR-1525 / URRWXCal2) (Rickettsia azadi).